We begin with the raw amino-acid sequence, 242 residues long: Proteasome subunit alpha (242 aa).

The protein belongs to the peptidase T1A family. In terms of assembly, the 20S proteasome core is composed of 14 alpha and 14 beta subunits that assemble into four stacked heptameric rings, resulting in a barrel-shaped structure. The two inner rings, each composed of seven catalytic beta subunits, are sandwiched by two outer rings, each composed of seven alpha subunits. The catalytic chamber with the active sites is on the inside of the barrel. Has a gated structure, the ends of the cylinder being occluded by the N-termini of the alpha-subunits. Is capped by the proteasome-associated ATPase, ARC.

The protein localises to the cytoplasm. It participates in protein degradation; proteasomal Pup-dependent pathway. With respect to regulation, the formation of the proteasomal ATPase ARC-20S proteasome complex, likely via the docking of the C-termini of ARC into the intersubunit pockets in the alpha-rings, may trigger opening of the gate for substrate entry. Interconversion between the open-gate and close-gate conformations leads to a dynamic regulation of the 20S proteasome proteolysis activity. Functionally, component of the proteasome core, a large protease complex with broad specificity involved in protein degradation. The protein is Proteasome subunit alpha of Renibacterium salmoninarum (strain ATCC 33209 / DSM 20767 / JCM 11484 / NBRC 15589 / NCIMB 2235).